Here is a 200-residue protein sequence, read N- to C-terminus: Adenine phosphoribosyltransferase (200 aa).

It belongs to the purine/pyrimidine phosphoribosyltransferase family. As to quaternary structure, homodimer.

The protein resides in the cytoplasm. It carries out the reaction AMP + diphosphate = 5-phospho-alpha-D-ribose 1-diphosphate + adenine. It functions in the pathway purine metabolism; AMP biosynthesis via salvage pathway; AMP from adenine: step 1/1. Its function is as follows. Catalyzes a salvage reaction resulting in the formation of AMP, that is energically less costly than de novo synthesis. The chain is Adenine phosphoribosyltransferase from Sorangium cellulosum (strain So ce56) (Polyangium cellulosum (strain So ce56)).